A 46-amino-acid polypeptide reads, in one-letter code: Diuretic hormone (46 aa).

Isoleucine 46 carries the post-translational modification Isoleucine amide.

Belongs to the sauvagine/corticotropin-releasing factor/urotensin I family.

It localises to the secreted. Regulation of fluid secretion. Stimulates primary urine secretion by Malpighian tubules and causes a dose-dependent stimulation of cAMP levels in the tubules. This is Diuretic hormone from Locusta migratoria (Migratory locust).